The following is a 771-amino-acid chain: Dol-P-Glc:Glc(2)Man(9)GlcNAc(2)-PP-Dol alpha-1,2-glucosyltransferase (771 aa).

The next 7 membrane-spanning stretches (helical) occupy residues 45–65 (FITA…LALV), 160–180 (VSFY…IFFF), 182–202 (GLYY…WNHL), 221–241 (VVLG…VVVY), 293–313 (VDMA…IAAL), 326–346 (HITI…VVLG), and 357–377 (LPQM…LLIP). The disordered stretch occupies residues 392 to 449 (TPTPSHTTTKDPGRSSWRFTKPSITSKKSSTTKPPQRSGPTPASSSSSSSSFSPDTNS). Composition is skewed to low complexity over residues 411–426 (TKPS…TKPP) and 435–449 (SSSS…DTNS). A glycan (N-linked (GlcNAc...) asparagine) is linked at N448. 2 helical membrane passes run 469-489 (PFYL…NTII) and 503-525 (YIFR…AYTL). Residues 584–593 (QKNIKDKQKE) show a composition bias toward basic and acidic residues. Residues 584–605 (QKNIKDKQKEVEEEEEEEEKED) form a disordered region. Residues 594-604 (VEEEEEEEEKE) show a composition bias toward acidic residues. 2 helical membrane-spanning segments follow: residues 631–651 (TSTV…APLV) and 656–676 (FILP…SSSL). The tract at residues 682–708 (SSSFASSTTESGNGDGNDAATAARQQQ) is disordered. Residues 728 to 748 (LALETVWFLAINIGTMYMFLF) traverse the membrane as a helical segment.

Belongs to the ALG10 glucosyltransferase family.

It is found in the endoplasmic reticulum membrane. The catalysed reaction is an alpha-D-Glc-(1-&gt;3)-alpha-D-Glc-(1-&gt;3)-alpha-D-Man-(1-&gt;2)-alpha-D-Man-(1-&gt;2)-alpha-D-Man-(1-&gt;3)-[alpha-D-Man-(1-&gt;2)-alpha-D-Man-(1-&gt;3)-[alpha-D-Man-(1-&gt;2)-alpha-D-Man-(1-&gt;6)]-alpha-D-Man-(1-&gt;6)]-beta-D-Man-(1-&gt;4)-beta-D-GlcNAc-(1-&gt;4)-alpha-D-GlcNAc-diphospho-di-trans,poly-cis-dolichol + a di-trans,poly-cis-dolichyl beta-D-glucosyl phosphate = a alpha-D-Glc-(1-&gt;2)-alpha-D-Glc-(1-&gt;3)-alpha-D-Glc-(1-&gt;3)-alpha-D-Man-(1-&gt;2)-alpha-D-Man-(1-&gt;2)-alpha-D-Man-(1-&gt;3)-[alpha-D-Man-(1-&gt;2)-alpha-D-Man-(1-&gt;3)-[alpha-D-Man-(1-&gt;2)-alpha-D-Man-(1-&gt;6)]-alpha-D-Man-(1-&gt;6)]-beta-D-Man-(1-&gt;4)-beta-D-GlcNAc-(1-&gt;4)-alpha-D-GlcNAc-diphospho-di-trans,poly-cis-dolichol + a di-trans,poly-cis-dolichyl phosphate + H(+). The protein operates within protein modification; protein glycosylation. Functionally, dol-P-Glc:Glc(2)Man(9)GlcNAc(2)-PP-Dol alpha-1,2-glucosyltransferase that operates in the biosynthetic pathway of dolichol-linked oligosaccharides, the glycan precursors employed in protein asparagine (N)-glycosylation. The assembly of dolichol-linked oligosaccharides begins on the cytosolic side of the endoplasmic reticulum membrane and finishes in its lumen. The sequential addition of sugars to dolichol pyrophosphate produces dolichol-linked oligosaccharides containing fourteen sugars, including two GlcNAcs, nine mannoses and three glucoses. Once assembled, the oligosaccharide is transferred from the lipid to nascent proteins by oligosaccharyltransferases. In the lumen of the endoplasmic reticulum, adds the third and last glucose residue from dolichyl phosphate glucose (Dol-P-Glc) onto the lipid-linked oligosaccharide intermediate Glc(2)Man(9)GlcNAc(2)-PP-Dol to produce Glc(3)Man(9)GlcNAc(2)-PP-Dol. The protein is Dol-P-Glc:Glc(2)Man(9)GlcNAc(2)-PP-Dol alpha-1,2-glucosyltransferase (alg-10) of Neurospora crassa (strain ATCC 24698 / 74-OR23-1A / CBS 708.71 / DSM 1257 / FGSC 987).